The chain runs to 90 residues: UPF0329 protein ECU04_1650 (90 aa).

Belongs to the UPF0329 family.

In Encephalitozoon cuniculi (strain GB-M1) (Microsporidian parasite), this protein is UPF0329 protein ECU04_1650.